The primary structure comprises 337 residues: MTQPIARSIPLQVVSGDTAAPAPLQTGVKQIGGDKINRSPVQFVDAPVLRKPSWIRVRIPSGNAVQNLKAKLRENRLVTVCEEASCPNIHECFSHGTATFMILGEVCTRRCSFCDVAHGRPKPPDASEPASLAATVADMGLKYVVVTSVDRDDLRDGGAQHFVDCISAIRTSSPNTRIEILTPDFRGKGRMDRALEILALSPPDVFNHNIETVPDLYPNVRPGADYQWSLTLLQRFKAQHPSIATKSGIMLGLGETMEQVQATLRDLRAHDVDMITIGQYLQPTPHHHPVMRYWTPEEYKALEDYGNALGFSHVASGPMVRSSYHADRQAAGAGVAA.

Cys-81, Cys-86, Cys-92, Cys-107, Cys-111, Cys-114, and Ser-323 together coordinate [4Fe-4S] cluster. The Radical SAM core domain occupies 93–312 (FSHGTATFMI…EDYGNALGFS (220 aa)).

The protein belongs to the radical SAM superfamily. Lipoyl synthase family. [4Fe-4S] cluster is required as a cofactor.

It is found in the cytoplasm. It carries out the reaction [[Fe-S] cluster scaffold protein carrying a second [4Fe-4S](2+) cluster] + N(6)-octanoyl-L-lysyl-[protein] + 2 oxidized [2Fe-2S]-[ferredoxin] + 2 S-adenosyl-L-methionine + 4 H(+) = [[Fe-S] cluster scaffold protein] + N(6)-[(R)-dihydrolipoyl]-L-lysyl-[protein] + 4 Fe(3+) + 2 hydrogen sulfide + 2 5'-deoxyadenosine + 2 L-methionine + 2 reduced [2Fe-2S]-[ferredoxin]. The protein operates within protein modification; protein lipoylation via endogenous pathway; protein N(6)-(lipoyl)lysine from octanoyl-[acyl-carrier-protein]: step 2/2. In terms of biological role, catalyzes the radical-mediated insertion of two sulfur atoms into the C-6 and C-8 positions of the octanoyl moiety bound to the lipoyl domains of lipoate-dependent enzymes, thereby converting the octanoylated domains into lipoylated derivatives. The polypeptide is Lipoyl synthase (Xanthomonas axonopodis pv. citri (strain 306)).